Reading from the N-terminus, the 443-residue chain is 2-hydroxyethylphosphonate dioxygenase (443 aa).

The region spanning Leu-8–Leu-63 is the HTH cro/C1-type 1 domain. Residue Lys-16 participates in substrate binding. The segment at residues Ala-19 to Gly-38 is a DNA-binding region (H-T-H motif). Residues Tyr-98 and Asn-126 each contribute to the substrate site. Residue His-129 coordinates Fe cation. Residues Glu-176, His-182, and Ser-196 each coordinate substrate. His-182 is a binding site for Fe cation. One can recognise an HTH cro/C1-type 2 domain in the interval Val-234–Leu-290. The H-T-H motif DNA-binding region spans Thr-245–Arg-265.

It belongs to the non-heme iron-dependent dioxygenase family. In terms of assembly, homodimer. The cofactor is Fe(2+).

It catalyses the reaction 2-hydroxyethylphosphonate + O2 = hydroxymethylphosphonate + formate + H(+). It participates in secondary metabolite biosynthesis; bialaphos biosynthesis. Non-heme-dependent dioxygenase that catalyzes the conversion of 2-hydroxyethylphosphonate (HEP) to hydroxymethylphosphonate (HMP) in the biosynthesis of phosphinothricin tripeptide (PTT), also known as bialaphos (BA), a natural-product antibiotic and potent herbicide. PTT contains the unusual amino acid phosphinothricin attached to 2 alanine residues. Synthetic phosphinothricin (glufosinate) is a key component of commercial herbicides. The protein is 2-hydroxyethylphosphonate dioxygenase (hepD) of Streptomyces viridochromogenes (strain DSM 40736 / JCM 4977 / BCRC 1201 / Tue 494).